Consider the following 743-residue polypeptide: 1,4-alpha-glucan branching enzyme GlgB (743 aa).

D416 (nucleophile) is an active-site residue. E469 (proton donor) is an active-site residue.

Belongs to the glycosyl hydrolase 13 family. GlgB subfamily. Monomer.

The catalysed reaction is Transfers a segment of a (1-&gt;4)-alpha-D-glucan chain to a primary hydroxy group in a similar glucan chain.. It functions in the pathway glycan biosynthesis; glycogen biosynthesis. Its function is as follows. Catalyzes the formation of the alpha-1,6-glucosidic linkages in glycogen by scission of a 1,4-alpha-linked oligosaccharide from growing alpha-1,4-glucan chains and the subsequent attachment of the oligosaccharide to the alpha-1,6 position. The polypeptide is 1,4-alpha-glucan branching enzyme GlgB (Shewanella baltica (strain OS223)).